Consider the following 366-residue polypeptide: tRNA/tmRNA (uracil-C(5))-methyltransferase (366 aa).

Residues glutamine 190, tyrosine 218, asparagine 223, glutamate 239, and aspartate 299 each coordinate S-adenosyl-L-methionine. Catalysis depends on cysteine 324, which acts as the Nucleophile. Glutamate 358 (proton acceptor) is an active-site residue.

The protein belongs to the class I-like SAM-binding methyltransferase superfamily. RNA M5U methyltransferase family. TrmA subfamily.

The catalysed reaction is uridine(54) in tRNA + S-adenosyl-L-methionine = 5-methyluridine(54) in tRNA + S-adenosyl-L-homocysteine + H(+). It carries out the reaction uridine(341) in tmRNA + S-adenosyl-L-methionine = 5-methyluridine(341) in tmRNA + S-adenosyl-L-homocysteine + H(+). Dual-specificity methyltransferase that catalyzes the formation of 5-methyluridine at position 54 (m5U54) in all tRNAs, and that of position 341 (m5U341) in tmRNA (transfer-mRNA). In Escherichia coli O7:K1 (strain IAI39 / ExPEC), this protein is tRNA/tmRNA (uracil-C(5))-methyltransferase.